We begin with the raw amino-acid sequence, 392 residues long: MVFSKDLPSPATMFSTYASLAGYIMMIKPMIHTIIPRPIQNFVFSYIKSFVGSPQAYLSSKISPDASKLRMTRDPNNKNVNLHLSQGEVVSDVYKGIELKWRYLEGRNKKTTVVGEETEEAIVNWQCFELSFDKKHKDLVVKSYIAYVERKAKVIKEERRIIKMHSYSSYTLRWQSVKFEHPSTFHTMAMTPKLKSSVMEDLDRFIKRKDYYKRVGKAWKRSYFLYGPPGTGKSSLVAAMANYLKFDIYDLQLANVQGDAQLRSLLLATNNSSILLVEDIDCSVDLPTRLQPATTTLGAPKGSTPLTLSGLLNCIDGLWSSCGDERIVIFTTNNKEVLDPALLRPGCMDMHIYLGHCSFEGFKILASNYLGMPHDSDDPHRLYPDIKRLIDG.

The chain crosses the membrane as a helical span at residues 13–35 (MFSTYASLAGYIMMIKPMIHTII). Residue 227-234 (GPPGTGKS) coordinates ATP.

It belongs to the AAA ATPase family. BCS1 subfamily. Requires Mg(2+) as cofactor.

The protein localises to the membrane. It carries out the reaction ATP + H2O = ADP + phosphate + H(+). The sequence is that of AAA-ATPase At5g17750 from Arabidopsis thaliana (Mouse-ear cress).